Consider the following 611-residue polypeptide: MRADDNPSARSLHAQFPGDDTRPTSKKELAGWYSYGWAAEVFTVCAMGSFLPITLEQMARDRGVLLSDKVTPCSASWNGTETTARTHGISPPWYGINATPGTSQCVVYILGAEINTASFAMYTFSVSVFVQAVLIISMSGAADHGSFRKTLLVAFAVIGSVCTMLFLSVVPKIYIVGALFAIVANTCFGASFVLLNSFLPLLVRHHPSLLGHENERSPELNHSHITDDRVQFAANADYGIDADATSPLLQPVQGDSDEHTTSRLPVTSVVISEELKLSTRISSLGIGIGYIGAVILQIICILVIIATRQTTFSLRLVLFLIGLWWFVFTIPAALWLRPRPGPPLPKAPQGKDNRSCVGYMVYAWKSLCRTAVRTRHLKDILLFLTAWFLLSDGIATVSGTAVLFAKTQLNMKPAALGLINVVTMMAGVFGAFSWSFVSRRLNLGASQTIIACILLFELIPIYGLLGFVPAIRKLGYLGLQQPWEMFPLGIVYGLVMGGLSSYCRSFFGELIPPGNEAAFYALYAITDKGSSIFGPAIVGLITDRYGEIRPAFVFLAVLIFLPLPLMLLVDVGRGKKDALALAVELEEGQSSNTQTYGTLSNCERNAVPTDQ.

The tract at residues 1–24 (MRADDNPSARSLHAQFPGDDTRPT) is disordered. Residues 35–55 (YGWAAEVFTVCAMGSFLPITL) form a helical membrane-spanning segment. Residue asparagine 78 is glycosylated (N-linked (GlcNAc...) asparagine). Transmembrane regions (helical) follow at residues 116–136 (TASFAMYTFSVSVFVQAVLII), 151–171 (LLVAFAVIGSVCTMLFLSVVP), and 175–195 (IVGALFAIVANTCFGASFVLL). An N-linked (GlcNAc...) asparagine glycan is attached at asparagine 221. Transmembrane regions (helical) follow at residues 286–306 (IGIGYIGAVILQIICILVIIA) and 316–336 (LVLFLIGLWWFVFTIPAALWL). An N-linked (GlcNAc...) asparagine glycan is attached at asparagine 353. A run of 6 helical transmembrane segments spans residues 380 to 400 (ILLFLTAWFLLSDGIATVSGT), 414 to 434 (AALGLINVVTMMAGVFGAFSW), 449 to 469 (IIACILLFELIPIYGLLGFVP), 483 to 503 (WEMFPLGIVYGLVMGGLSSYC), 521 to 541 (ALYAITDKGSSIFGPAIVGLI), and 551 to 571 (AFVFLAVLIFLPLPLMLLVDV).

It belongs to the ATG22 family.

Its subcellular location is the vacuole membrane. In terms of biological role, vacuolar effluxer which mediate the efflux of amino acids resulting from autophagic degradation. The release of autophagic amino acids allows the maintenance of protein synthesis and viability during nitrogen starvation. The sequence is that of Autophagy-related protein 22-2 (atg22-2) from Aspergillus clavatus (strain ATCC 1007 / CBS 513.65 / DSM 816 / NCTC 3887 / NRRL 1 / QM 1276 / 107).